Consider the following 455-residue polypeptide: Ribulose bisphosphate carboxylase large chain (455 aa).

N6,N6,N6-trimethyllysine is present on Lys5. The substrate site is built by Asn114 and Thr164. Catalysis depends on Lys166, which acts as the Proton acceptor. Substrate is bound at residue Lys168. Residues Lys192, Asp194, and Glu195 each coordinate Mg(2+). Lys192 is modified (N6-carboxylysine). The active-site Proton acceptor is the His285. Substrate is bound by residues Arg286, His318, and Ser370.

This sequence belongs to the RuBisCO large chain family. Type I subfamily. In terms of assembly, heterohexadecamer of 8 large chains and 8 small chains. It depends on Mg(2+) as a cofactor.

The protein localises to the plastid. Its subcellular location is the chloroplast. The enzyme catalyses 2 (2R)-3-phosphoglycerate + 2 H(+) = D-ribulose 1,5-bisphosphate + CO2 + H2O. The catalysed reaction is D-ribulose 1,5-bisphosphate + O2 = 2-phosphoglycolate + (2R)-3-phosphoglycerate + 2 H(+). In terms of biological role, ruBisCO catalyzes two reactions: the carboxylation of D-ribulose 1,5-bisphosphate, the primary event in carbon dioxide fixation, as well as the oxidative fragmentation of the pentose substrate in the photorespiration process. Both reactions occur simultaneously and in competition at the same active site. The chain is Ribulose bisphosphate carboxylase large chain from Tamarindus indica (Tamarind).